Here is a 172-residue protein sequence, read N- to C-terminus: Ribosome maturation factor RimM (172 aa).

The 73-residue stretch at 96-168 (EGEFYYHQII…RVDVELMEGL (73 aa)) folds into the PRC barrel domain.

The protein belongs to the RimM family. Binds ribosomal protein uS19.

It is found in the cytoplasm. In terms of biological role, an accessory protein needed during the final step in the assembly of 30S ribosomal subunit, possibly for assembly of the head region. Essential for efficient processing of 16S rRNA. May be needed both before and after RbfA during the maturation of 16S rRNA. It has affinity for free ribosomal 30S subunits but not for 70S ribosomes. The polypeptide is Ribosome maturation factor RimM (Streptococcus pyogenes serotype M6 (strain ATCC BAA-946 / MGAS10394)).